A 65-amino-acid chain; its full sequence is Large ribosomal subunit protein bL35 (65 aa).

This sequence belongs to the bacterial ribosomal protein bL35 family.

In Oleidesulfovibrio alaskensis (strain ATCC BAA-1058 / DSM 17464 / G20) (Desulfovibrio alaskensis), this protein is Large ribosomal subunit protein bL35.